The following is a 299-amino-acid chain: UDP-N-acetylenolpyruvoylglucosamine reductase (299 aa).

The 166-residue stretch at K28–G193 folds into the FAD-binding PCMH-type domain. The active site involves R172. The active-site Proton donor is S222. E292 is an active-site residue.

The protein belongs to the MurB family. FAD is required as a cofactor.

The protein resides in the cytoplasm. The enzyme catalyses UDP-N-acetyl-alpha-D-muramate + NADP(+) = UDP-N-acetyl-3-O-(1-carboxyvinyl)-alpha-D-glucosamine + NADPH + H(+). Its pathway is cell wall biogenesis; peptidoglycan biosynthesis. Its function is as follows. Cell wall formation. The sequence is that of UDP-N-acetylenolpyruvoylglucosamine reductase from Lactococcus lactis subsp. cremoris (strain SK11).